The sequence spans 43 residues: Mu-conotoxin-like CalTx 12.2.1E (43 aa).

Arg-1 is a propeptide. 4 disulfides stabilise this stretch: Cys-4/Cys-16, Cys-11/Cys-24, Cys-18/Cys-29, and Cys-23/Cys-35. Trp-31 carries the 6'-bromotryptophan modification. A 4-hydroxyproline modification is found at Pro-36. Trp-40 is subject to 6'-bromotryptophan.

In terms of tissue distribution, expressed by the venom duct.

The protein resides in the secreted. Functionally, mu-conotoxins block voltage-gated sodium channels. This toxin reversibly blocks voltage-gated sodium channel in cephalopods, with no alteration in the voltage dependence of sodium conductance or on the kinetics of inactivation. In Californiconus californicus (California cone), this protein is Mu-conotoxin-like CalTx 12.2.1E.